Consider the following 281-residue polypeptide: Ribulose-5-phosphate-3-epimerase, chloroplastic (281 aa).

The N-terminal 45 residues, 1–45 (MSTSAASLCCSSTQVNGFGLRPERSLLYQPTSFSFSRRRTHGIVK), are a transit peptide targeting the chloroplast. Residue Ser-63 participates in substrate binding. Residues His-88, Asp-90, and His-121 each contribute to the a divalent metal cation site. Asp-90 serves as the catalytic Proton acceptor. Residues His-121, 199 to 202 (GFGG), 232 to 234 (DGG), and 254 to 256 (GSA) contribute to the substrate site. Asp-232 is a binding site for a divalent metal cation. The active-site Proton donor is the Asp-232.

This sequence belongs to the ribulose-phosphate 3-epimerase family. As to quaternary structure, homooctamer. It depends on Co(2+) as a cofactor. Requires Fe(2+) as cofactor. Mn(2+) serves as cofactor. Zn(2+) is required as a cofactor. In terms of tissue distribution, present in roots, seeds and flowers. Accumulates in nematode feeding sites (NFS).

It is found in the plastid. Its subcellular location is the chloroplast thylakoid membrane. It catalyses the reaction D-ribulose 5-phosphate = D-xylulose 5-phosphate. The protein operates within carbohydrate biosynthesis; Calvin cycle. Functionally, essential protein required during embryogenesis. Catalyzes the reversible epimerization of D-ribulose 5-phosphate to D-xylulose 5-phosphate. Essential for the early steps of nematode feeding sites (NFS, multinucleated root cells) formation induced by the root-knot nematodes Heterodera schachtii, Meloidogyne incognita, M.javanica and M.hapla. The chain is Ribulose-5-phosphate-3-epimerase, chloroplastic from Arabidopsis thaliana (Mouse-ear cress).